Here is a 56-residue protein sequence, read N- to C-terminus: GLFIIDKEGVIQHSTINNEGVIQHSTINNLAIGRFGVLLADQGLALRSIPNGPSAL.

The protein belongs to the peroxiredoxin family. AhpC/Prx1 subfamily. In terms of assembly, homodimer; disulfide-linked, upon oxidation.

The protein resides in the plastid. It localises to the chloroplast. The enzyme catalyses a hydroperoxide + [thioredoxin]-dithiol = an alcohol + [thioredoxin]-disulfide + H2O. In terms of biological role, thiol-specific peroxidase that catalyzes the reduction of hydrogen peroxide and organic hydroperoxides to water and alcohols, respectively. Plays a role in cell protection against oxidative stress by detoxifying peroxides. May be an antioxidant enzyme particularly in the developing shoot and photosynthesizing leaf. The polypeptide is Putative 2-Cys peroxiredoxin BAS1 (Pinus strobus (Eastern white pine)).